A 361-amino-acid chain; its full sequence is WAT1-related protein At4g01450 (361 aa).

The next 10 helical transmembrane spans lie at 8–28 (WAPM…NALV), 40–60 (VIAT…AYFW), 76–96 (LFVS…LGLS), 103–123 (GSAF…IFGF), 132–152 (IGYG…LLTM), 177–197 (WIKG…WMLI), 209–229 (YSST…LSLI), 243–263 (LTII…TVGM), 273–293 (VVSS…DFLI), and 298–318 (IYLG…IFLW). EamA domains follow at residues 21–142 (AGMV…GTLI) and 194–317 (WMLI…YIFL).

Belongs to the drug/metabolite transporter (DMT) superfamily. Plant drug/metabolite exporter (P-DME) (TC 2.A.7.4) family.

It is found in the membrane. The polypeptide is WAT1-related protein At4g01450 (Arabidopsis thaliana (Mouse-ear cress)).